The primary structure comprises 317 residues: Small ribosomal subunit protein uS2 (317 aa).

Disordered regions lie at residues 1-30 (MENENLKVEQATTAENNMAEKADDSKASKE) and 293-317 (RSFEQNSAEGVKTVEKTTTSTEVAE). Basic and acidic residues predominate over residues 18-30 (MAEKADDSKASKE). The segment covering 308 to 317 (KTTTSTEVAE) has biased composition (low complexity).

This sequence belongs to the universal ribosomal protein uS2 family.

The chain is Small ribosomal subunit protein uS2 from Mycoplasmopsis agalactiae (strain NCTC 10123 / CIP 59.7 / PG2) (Mycoplasma agalactiae).